The sequence spans 206 residues: Small ribosomal subunit protein uS2 (206 aa).

The protein belongs to the universal ribosomal protein uS2 family.

The chain is Small ribosomal subunit protein uS2 from Pyrobaculum neutrophilum (strain DSM 2338 / JCM 9278 / NBRC 100436 / V24Sta) (Thermoproteus neutrophilus).